An 83-amino-acid chain; its full sequence is Putative defensin-like protein 66 (83 aa).

The first 22 residues, M1–L22, serve as a signal peptide directing secretion. Cystine bridges form between C38-C82, C42-C65, C51-C80, and C55-C81.

Belongs to the DEFL family.

Its subcellular location is the secreted. In Arabidopsis thaliana (Mouse-ear cress), this protein is Putative defensin-like protein 66.